The sequence spans 79 residues: Cytochrome b (79 aa).

A run of 3 helical transmembrane segments spans residues 1–7, 31–52, and 67–79; these read TALFLAM, WLIRNMHANGASFFFICIYLHI, and WNVGVVLLLLTMM. Heme b-binding residues include His37 and His51.

This sequence belongs to the cytochrome b family. As to quaternary structure, the cytochrome bc1 complex contains 3 respiratory subunits (MT-CYB, CYC1 and UQCRFS1), 2 core proteins (UQCRC1 and UQCRC2) and probably 6 low-molecular weight proteins. Requires heme b as cofactor.

Its subcellular location is the mitochondrion inner membrane. In terms of biological role, component of the ubiquinol-cytochrome c reductase complex (complex III or cytochrome b-c1 complex) that is part of the mitochondrial respiratory chain. The b-c1 complex mediates electron transfer from ubiquinol to cytochrome c. Contributes to the generation of a proton gradient across the mitochondrial membrane that is then used for ATP synthesis. The sequence is that of Cytochrome b (mt-cyb) from Amphilophus citrinellus (Midas cichlid).